The sequence spans 234 residues: NAD-dependent protein deacylase (234 aa).

Positions 1–234 (MTKQVRIVVL…LVPHYLAQFL (234 aa)) constitute a Deacetylase sirtuin-type domain. 12 to 31 (GAGISAESGIRTFRATDGLW) serves as a coordination point for NAD(+). Positions 56 and 59 each coordinate substrate. 93 to 96 (QNVD) is a binding site for NAD(+). His111 serves as the catalytic Proton acceptor. Zn(2+) is bound by residues Cys119 and Cys138. NAD(+)-binding positions include 178–180 (GTS), 204–206 (NLE), and Ala222.

Belongs to the sirtuin family. Class III subfamily. It depends on Zn(2+) as a cofactor.

It localises to the cytoplasm. The enzyme catalyses N(6)-acetyl-L-lysyl-[protein] + NAD(+) + H2O = 2''-O-acetyl-ADP-D-ribose + nicotinamide + L-lysyl-[protein]. The catalysed reaction is N(6)-succinyl-L-lysyl-[protein] + NAD(+) + H2O = 2''-O-succinyl-ADP-D-ribose + nicotinamide + L-lysyl-[protein]. Its function is as follows. NAD-dependent lysine deacetylase and desuccinylase that specifically removes acetyl and succinyl groups on target proteins. Modulates the activities of several proteins which are inactive in their acylated form. This chain is NAD-dependent protein deacylase, found in Pasteurella multocida (strain Pm70).